Here is a 108-residue protein sequence, read N- to C-terminus: Abscisic stress-ripening protein 3 (108 aa).

Disordered stretches follow at residues 1–34 (MAEE…HHSH) and 84–108 (FAFH…GRHH). Residues 15–24 (NREEEGGPVD) are compositionally biased toward basic and acidic residues. Basic residues predominate over residues 25–34 (HKKKVKHHSH). Over residues 95–108 (AKKEKKAAEKGRHH) the composition is skewed to basic and acidic residues.

Belongs to the abscisic acid and water stress-induced protein family.

The protein is Abscisic stress-ripening protein 3 of Solanum lycopersicum (Tomato).